The chain runs to 545 residues: POTE ankyrin domain family member H (545 aa).

ANK repeat units lie at residues 180-208 (LHRA…KKDK), 209-238 (QKRT…QLNI), 242-271 (KKRT…DPNI), 275-304 (YGNT…DIES), 308-337 (HGLT…NLNA), 341-370 (YGRT…DVSS), and 374-404 (SGQT…QILK). Positions 406–524 (SSENSNPEQD…KQLSEEQNTG (119 aa)) are disordered. Composition is skewed to basic and acidic residues over residues 414–429 (QDLK…RLKG) and 443–458 (EINK…EMKK). The span at 513 to 524 (TQKQLSEEQNTG) shows a compositional bias: polar residues.

It belongs to the POTE family.

The sequence is that of POTE ankyrin domain family member H (POTEH) from Homo sapiens (Human).